Here is a 427-residue protein sequence, read N- to C-terminus: Enolase (427 aa).

Glutamine 163 is a (2R)-2-phosphoglycerate binding site. Glutamate 205 acts as the Proton donor in catalysis. 3 residues coordinate Mg(2+): aspartate 242, glutamate 285, and aspartate 312. Residues lysine 337, arginine 366, serine 367, and lysine 388 each coordinate (2R)-2-phosphoglycerate. Lysine 337 acts as the Proton acceptor in catalysis.

Belongs to the enolase family. Mg(2+) serves as cofactor.

The protein resides in the cytoplasm. The protein localises to the secreted. Its subcellular location is the cell surface. It carries out the reaction (2R)-2-phosphoglycerate = phosphoenolpyruvate + H2O. The protein operates within carbohydrate degradation; glycolysis; pyruvate from D-glyceraldehyde 3-phosphate: step 4/5. Its function is as follows. Catalyzes the reversible conversion of 2-phosphoglycerate (2-PG) into phosphoenolpyruvate (PEP). It is essential for the degradation of carbohydrates via glycolysis. This chain is Enolase, found in Ralstonia pickettii (strain 12J).